We begin with the raw amino-acid sequence, 169 residues long: Secreted LysM effector Blys5 (169 aa).

The first 19 residues, 1–19 (MKLSVISAVFVSLAAAAAA), serve as a signal peptide directing secretion. LysM domains lie at 47-94 (TYYQ…YYCV) and 121-167 (QWYK…NVCV).

It belongs to the secreted LysM effector family.

Its function is as follows. Secreted effector that enables the plant pathogenic fungus to manipulate host defenses for successful infection. Required for the full virulence to infect insect hosts. Protects fungal hyphae against the hydrolytic activity of chitinase and plays an important role in evasion of insect immunities. Binds chitin and can additionally bind chitosan and cellulose. Coats and protects the cell walls of insect pathogens from host cell recognition and additionally shields fungal cells from the hydrolysis of insect chitinases. The protein is Secreted LysM effector Blys5 of Beauveria bassiana (strain ARSEF 2860) (White muscardine disease fungus).